A 303-amino-acid polypeptide reads, in one-letter code: MPATAPTWDPAQYLRHAGHRARPFTDLLARIPDLPADPPRIADLGCGPGNVTVLLADRWPTARITGYDNSPRMLERARQYAGPTSGGGHLDFAPADARSWTPDEPCDLLVSNATLQWVPGHADLFPGWIDRLAPGGTLALQVPGNFDAPSHRLMRELADSRRWRERLAGVLRHDDAVLTPEGYLAHLTAAGCTADVWETTYVHLLPGDDAVLDWVRGTGLRPVLDALDGDPAARDAFVDEYRAVLRAAYPAQAHGTPFPFRRVFAVARKPEGSGGSGGSGGSAGSAGCAGSGGSVGPAGEAGR.

The disordered stretch occupies residues glutamate 271–arginine 303. Positions glycine 272–arginine 303 are enriched in gly residues.

This sequence belongs to the methyltransferase superfamily. Tam family.

It is found in the cytoplasm. It carries out the reaction trans-aconitate + S-adenosyl-L-methionine = (E)-3-(methoxycarbonyl)pent-2-enedioate + S-adenosyl-L-homocysteine. In terms of biological role, catalyzes the S-adenosylmethionine monomethyl esterification of trans-aconitate. This is Trans-aconitate 2-methyltransferase from Streptomyces coelicolor (strain ATCC BAA-471 / A3(2) / M145).